The primary structure comprises 425 residues: Arogenate dehydratase 5, chloroplastic (425 aa).

Residues M1 to R38 constitute a chloroplast transit peptide. Residues R127–R304 enclose the Prephenate dehydratase domain. The region spanning V320–P411 is the ACT domain.

As to expression, expressed in roots, leaves, stems, flowers and siliques. More abundant in stems and roots.

It is found in the plastid. The protein resides in the chloroplast stroma. It carries out the reaction L-arogenate + H(+) = L-phenylalanine + CO2 + H2O. It participates in amino-acid biosynthesis; L-phenylalanine biosynthesis; L-phenylalanine from L-arogenate: step 1/1. Functionally, converts the prephenate produced from the shikimate-chorismate pathway into phenylalanine. The sequence is that of Arogenate dehydratase 5, chloroplastic from Arabidopsis thaliana (Mouse-ear cress).